An 86-amino-acid polypeptide reads, in one-letter code: Putative sodium channel toxin Ts17 (86 aa).

Residues 1-19 (MNYFIFLVVACLLTAGTEG) form the signal peptide. Positions 21–82 (KDGYPVEGDN…EPTKTSGRCK (62 aa)) constitute an LCN-type CS-alpha/beta domain. Cystine bridges form between C31/C81, C35/C57, C43/C64, and C47/C66. P83 bears the Proline amide mark.

The protein belongs to the long (4 C-C) scorpion toxin superfamily. Sodium channel inhibitor family. Alpha subfamily. Expressed by the venom gland.

Its subcellular location is the secreted. Functionally, alpha toxins bind voltage-independently at site-3 of sodium channels (Nav) and inhibit the inactivation of the activated channels, thereby blocking neuronal transmission. The protein is Putative sodium channel toxin Ts17 of Tityus serrulatus (Brazilian scorpion).